Reading from the N-terminus, the 293-residue chain is Elongation factor Ts (293 aa).

The segment at 81–84 (TDFV) is involved in Mg(2+) ion dislocation from EF-Tu.

The protein belongs to the EF-Ts family.

The protein resides in the cytoplasm. Its function is as follows. Associates with the EF-Tu.GDP complex and induces the exchange of GDP to GTP. It remains bound to the aminoacyl-tRNA.EF-Tu.GTP complex up to the GTP hydrolysis stage on the ribosome. This Thioalkalivibrio sulfidiphilus (strain HL-EbGR7) protein is Elongation factor Ts.